The sequence spans 548 residues: Probable aquaglyceroporin-4 (548 aa).

Positions 1 to 22 (MAGTQDQSQDYFSKPTTPSTPG) are enriched in polar residues. Disordered stretches follow at residues 1–63 (MAGT…LPST), 76–101 (SRGFSRVSSEGTASRPTAPQHSSHFH), and 158–270 (KEET…ESGD). The Cytoplasmic portion of the chain corresponds to 1–290 (MAGTQDQSQD…ARLRARHPEP (290 aa)). The span at 38–48 (PDRESGTERAK) shows a compositional bias: basic and acidic residues. Polar residues-rich tracts occupy residues 77 to 97 (RGFSRVSSEGTASRPTAPQHS) and 171 to 200 (SRTTSGQPYRVETQSSLPSRDIQRQQSRTT). The segment covering 249–265 (PDFKVDGEPLGHQEKPC) has biased composition (basic and acidic residues). The helical transmembrane segment at 291–311 (LAEFLATAVAIFLGLTGTLSV) threads the bilayer. Asparagine 312 is a glycosylation site (N-linked (GlcNAc...) asparagine). At 312–327 (NLSATQSQPYGTYETS) the chain is on the extracellular side. The helical transmembrane segment at 328 to 348 (CWAWGFAWMFGIYLGGGVSGA) threads the bilayer. The Cytoplasmic segment spans residues 349 to 369 (HMNPAISVSLSIFRGFPWRQC). An NPA 1 motif is present at residues 351-353 (NPA). Residues 370–390 (VIYVFVQFIASIVAGALAYAM) traverse the membrane as a helical segment. Topologically, residues 391–420 (YADSINHVDPDMTKMSMTFFSTPREWVTLK) are extracellular. The helical transmembrane segment at 421–441 (SAFFNQVVGSAIMMIAVFALG) threads the bilayer. The Cytoplasmic portion of the chain corresponds to 442–448 (DDQNNPP). Residues 449 to 469 (GAGMHALVLGFLVTTLKFTLG) form a helical membrane-spanning segment. Residues 470-508 (YNIGSALNPASDFGPRVIAYAVGFRGDNVFHSGWWFYGP) are Extracellular-facing. Residues 477–479 (NPA) carry the NPA 2 motif. A helical transmembrane segment spans residues 509 to 529 (WAATLIGSLLGCTLYDGFVFV). The Cytoplasmic portion of the chain corresponds to 530 to 548 (GSESPVNFRVDKRVKKLFN).

It belongs to the MIP/aquaporin (TC 1.A.8) family.

Its subcellular location is the membrane. It carries out the reaction H2O(in) = H2O(out). The catalysed reaction is glycerol(in) = glycerol(out). In terms of biological role, probable water/glycerol channel that may have redundant functions with FgAQP2. The sequence is that of Probable aquaglyceroporin-4 from Gibberella zeae (strain ATCC MYA-4620 / CBS 123657 / FGSC 9075 / NRRL 31084 / PH-1) (Wheat head blight fungus).